The following is a 1652-amino-acid chain: Maestro heat-like repeat-containing protein family member 1 (1652 aa).

HEAT repeat units lie at residues 3-41, 260-300, 344-382, 385-423, 1369-1407, 1410-1448, and 1616-1652; these read ETYA…SKPA, EEQL…VGSR, CCSP…AAAA, EVKK…HGYL, LMLL…GSPD, QTHS…LMDL, and QVDL…VKFA.

The protein belongs to the MROH1 family. As to quaternary structure, homooligomer; homooligomerizes at lysosome scission sites.

It localises to the lysosome membrane. In terms of biological role, lysosome fission factor. Recruited to lysosomes by RAB7 (RAB7A or RAB7B) at scission sites and homooligomerizes to mediate the constriction and scission of lysosomal tubules. May sever membranes by inserting amphipathic helices into one bilayer leaflet. Lysosome fission is required to maintain their steady-state number, shape, size, composition and function, and to accomplish regeneration. This is Maestro heat-like repeat-containing protein family member 1 (MROH1) from Bos taurus (Bovine).